The chain runs to 480 residues: Dihydrolipoyllysine-residue acetyltransferase component 4 of pyruvate dehydrogenase complex, chloroplastic (480 aa).

The N-terminal 53 residues, 1-53, are a transit peptide targeting the chloroplast; the sequence is MAVSSSSFLSTASLTNSKSNISFASSVSPSLRSVVFRSTTPATSHRRSMTVRS. In terms of domain architecture, Lipoyl-binding spans 55-133; that stretch reads IREIFMPALS…AAIGLLAETE (79 aa). K96 bears the N6-lipoyllysine mark. Disordered regions lie at residues 140-168 and 224-245; these read KSKA…SPAP and AGIA…PVTA. Residues 142 to 156 show a composition bias toward low complexity; it reads KAASKSSSSVAEAVV. A Peripheral subunit-binding (PSBD) domain is found at 187 to 224; sequence VATPYAKKLAKQHKVDIESVAGTGPFGRITASDVETAA. A compositionally biased stretch (pro residues) spans 234 to 243; the sequence is APPPPPPPPV. H453 is an active-site residue.

It belongs to the 2-oxoacid dehydrogenase family. (R)-lipoate is required as a cofactor.

The protein localises to the plastid. It is found in the chloroplast stroma. It carries out the reaction N(6)-[(R)-dihydrolipoyl]-L-lysyl-[protein] + acetyl-CoA = N(6)-[(R)-S(8)-acetyldihydrolipoyl]-L-lysyl-[protein] + CoA. Functionally, the pyruvate dehydrogenase complex catalyzes the overall conversion of pyruvate to acetyl-CoA and CO(2). It contains multiple copies of three enzymatic components: pyruvate dehydrogenase (E1), dihydrolipoamide acetyltransferase (E2) and lipoamide dehydrogenase (E3). The protein is Dihydrolipoyllysine-residue acetyltransferase component 4 of pyruvate dehydrogenase complex, chloroplastic (LTA2) of Arabidopsis thaliana (Mouse-ear cress).